Here is a 71-residue protein sequence, read N- to C-terminus: ATP synthase subunit c (71 aa).

2 helical membrane-spanning segments follow: residues 4-24 and 47-67; these read IAAA…NGQV and FIGV…ALIL.

The protein belongs to the ATPase C chain family. As to quaternary structure, F-type ATPases have 2 components, F(1) - the catalytic core - and F(0) - the membrane proton channel. F(1) has five subunits: alpha(3), beta(3), gamma(1), delta(1), epsilon(1). F(0) has three main subunits: a(1), b(2) and c(10-14). The alpha and beta chains form an alternating ring which encloses part of the gamma chain. F(1) is attached to F(0) by a central stalk formed by the gamma and epsilon chains, while a peripheral stalk is formed by the delta and b chains.

It is found in the cell membrane. In terms of biological role, f(1)F(0) ATP synthase produces ATP from ADP in the presence of a proton or sodium gradient. F-type ATPases consist of two structural domains, F(1) containing the extramembraneous catalytic core and F(0) containing the membrane proton channel, linked together by a central stalk and a peripheral stalk. During catalysis, ATP synthesis in the catalytic domain of F(1) is coupled via a rotary mechanism of the central stalk subunits to proton translocation. Functionally, key component of the F(0) channel; it plays a direct role in translocation across the membrane. A homomeric c-ring of between 10-14 subunits forms the central stalk rotor element with the F(1) delta and epsilon subunits. In Enterococcus hirae (strain ATCC 9790 / DSM 20160 / JCM 8729 / LMG 6399 / NBRC 3181 / NCIMB 6459 / NCDO 1258 / NCTC 12367 / WDCM 00089 / R), this protein is ATP synthase subunit c.